Reading from the N-terminus, the 214-residue chain is Thiamine-phosphate synthase (214 aa).

4-amino-2-methyl-5-(diphosphooxymethyl)pyrimidine contacts are provided by residues 37–41 (QLRDK) and asparagine 69. Positions 70 and 89 each coordinate Mg(2+). Serine 108 is a 4-amino-2-methyl-5-(diphosphooxymethyl)pyrimidine binding site. 2-[(2R,5Z)-2-carboxy-4-methylthiazol-5(2H)-ylidene]ethyl phosphate is bound at residue 134–136 (TDS). Lysine 137 serves as a coordination point for 4-amino-2-methyl-5-(diphosphooxymethyl)pyrimidine. 2-[(2R,5Z)-2-carboxy-4-methylthiazol-5(2H)-ylidene]ethyl phosphate is bound by residues glycine 167 and 187-188 (IS).

This sequence belongs to the thiamine-phosphate synthase family. Requires Mg(2+) as cofactor.

The catalysed reaction is 2-[(2R,5Z)-2-carboxy-4-methylthiazol-5(2H)-ylidene]ethyl phosphate + 4-amino-2-methyl-5-(diphosphooxymethyl)pyrimidine + 2 H(+) = thiamine phosphate + CO2 + diphosphate. It carries out the reaction 2-(2-carboxy-4-methylthiazol-5-yl)ethyl phosphate + 4-amino-2-methyl-5-(diphosphooxymethyl)pyrimidine + 2 H(+) = thiamine phosphate + CO2 + diphosphate. It catalyses the reaction 4-methyl-5-(2-phosphooxyethyl)-thiazole + 4-amino-2-methyl-5-(diphosphooxymethyl)pyrimidine + H(+) = thiamine phosphate + diphosphate. Its pathway is cofactor biosynthesis; thiamine diphosphate biosynthesis; thiamine phosphate from 4-amino-2-methyl-5-diphosphomethylpyrimidine and 4-methyl-5-(2-phosphoethyl)-thiazole: step 1/1. Its function is as follows. Condenses 4-methyl-5-(beta-hydroxyethyl)thiazole monophosphate (THZ-P) and 2-methyl-4-amino-5-hydroxymethyl pyrimidine pyrophosphate (HMP-PP) to form thiamine monophosphate (TMP). The chain is Thiamine-phosphate synthase from Natronomonas pharaonis (strain ATCC 35678 / DSM 2160 / CIP 103997 / JCM 8858 / NBRC 14720 / NCIMB 2260 / Gabara) (Halobacterium pharaonis).